The primary structure comprises 195 residues: Nucleoside triphosphate pyrophosphatase (195 aa).

The Proton acceptor role is filled by aspartate 70.

It belongs to the Maf family. It depends on a divalent metal cation as a cofactor.

It localises to the cytoplasm. It catalyses the reaction a ribonucleoside 5'-triphosphate + H2O = a ribonucleoside 5'-phosphate + diphosphate + H(+). It carries out the reaction a 2'-deoxyribonucleoside 5'-triphosphate + H2O = a 2'-deoxyribonucleoside 5'-phosphate + diphosphate + H(+). Nucleoside triphosphate pyrophosphatase. May have a dual role in cell division arrest and in preventing the incorporation of modified nucleotides into cellular nucleic acids. In Microcystis aeruginosa (strain NIES-843 / IAM M-2473), this protein is Nucleoside triphosphate pyrophosphatase.